The following is a 358-amino-acid chain: Protein RecA 2 (358 aa).

Residue 69-76 (GPESSGKT) participates in ATP binding. A disordered region spans residues 331–358 (GIGKSGAPSPRRRTSPRRPKVAARSAAV). The segment covering 340 to 351 (PRRRTSPRRPKV) has biased composition (basic residues).

This sequence belongs to the RecA family.

The protein localises to the cytoplasm. Can catalyze the hydrolysis of ATP in the presence of single-stranded DNA, the ATP-dependent uptake of single-stranded DNA by duplex DNA, and the ATP-dependent hybridization of homologous single-stranded DNAs. It interacts with LexA causing its activation and leading to its autocatalytic cleavage. This is Protein RecA 2 from Myxococcus xanthus.